Consider the following 36-residue polypeptide: Conotoxin Bt11.4 (36 aa).

Intrachain disulfides connect cysteine 2–cysteine 16, cysteine 9–cysteine 21, cysteine 15–cysteine 26, and cysteine 20–cysteine 33.

The protein belongs to the conotoxin I1 superfamily. As to expression, expressed by the venom duct.

The protein resides in the secreted. The chain is Conotoxin Bt11.4 from Conus betulinus (Beech cone).